A 348-amino-acid polypeptide reads, in one-letter code: Succinylglutamate desuccinylase (348 aa).

Zn(2+) contacts are provided by His64, Glu67, and His164. Residue Glu228 is part of the active site.

Belongs to the AspA/AstE family. Succinylglutamate desuccinylase subfamily. Zn(2+) serves as cofactor.

It carries out the reaction N-succinyl-L-glutamate + H2O = L-glutamate + succinate. It participates in amino-acid degradation; L-arginine degradation via AST pathway; L-glutamate and succinate from L-arginine: step 5/5. Transforms N(2)-succinylglutamate into succinate and glutamate. In Shewanella amazonensis (strain ATCC BAA-1098 / SB2B), this protein is Succinylglutamate desuccinylase.